The primary structure comprises 373 residues: Tryptophan--tRNA ligase (373 aa).

The short motif at 79 to 87 (PSGKFHFGH) is the 'HIGH' region element. The 'KMSKS' region motif lies at 257 to 261 (KMSSS).

The protein belongs to the class-I aminoacyl-tRNA synthetase family.

Its subcellular location is the cytoplasm. It catalyses the reaction tRNA(Trp) + L-tryptophan + ATP = L-tryptophyl-tRNA(Trp) + AMP + diphosphate + H(+). The sequence is that of Tryptophan--tRNA ligase from Hyperthermus butylicus (strain DSM 5456 / JCM 9403 / PLM1-5).